We begin with the raw amino-acid sequence, 230 residues long: Ion-translocating oxidoreductase complex subunit E (230 aa).

Transmembrane regions (helical) follow at residues L22–G42, T63–V83, L86–V106, W125–L145, and P182–V202.

Belongs to the NqrDE/RnfAE family. As to quaternary structure, the complex is composed of six subunits: RsxA, RsxB, RsxC, RsxD, RsxE and RsxG.

It localises to the cell inner membrane. Part of a membrane-bound complex that couples electron transfer with translocation of ions across the membrane. Required to maintain the reduced state of SoxR. This Salmonella paratyphi A (strain ATCC 9150 / SARB42) protein is Ion-translocating oxidoreductase complex subunit E.